The primary structure comprises 490 residues: Lysine--tRNA ligase (490 aa).

Residues Glu400 and Glu407 each coordinate Mg(2+).

It belongs to the class-II aminoacyl-tRNA synthetase family. Homodimer. Mg(2+) is required as a cofactor.

The protein resides in the cytoplasm. It carries out the reaction tRNA(Lys) + L-lysine + ATP = L-lysyl-tRNA(Lys) + AMP + diphosphate. The chain is Lysine--tRNA ligase (lysS) from Mycoplasma genitalium (strain ATCC 33530 / DSM 19775 / NCTC 10195 / G37) (Mycoplasmoides genitalium).